The chain runs to 148 residues: Cytochrome c oxidase subunit 6, mitochondrial (148 aa).

The transit peptide at 1–40 (MASFFRTAVRGPSAGLFRAVARPQPIAARVSLFSTSSRFR) directs the protein to the mitochondrion.

The protein belongs to the cytochrome c oxidase subunit 5A family. In terms of assembly, component of the cytochrome c oxidase (complex IV, CIV), a multisubunit enzyme composed of 11 subunits. The complex is composed of a catalytic core of 3 subunits Cox1, Cox2 and Cox3, encoded in the mitochondrial DNA, and 8 supernumerary subunits Cox4, Cox5a/Cox5, Cox6, Cox7, Cox8, Cox7a/Cox9, Cox6b/Cox12 and Cox6a/Cox13, which are encoded in the nuclear genome. The complex exists as a monomer or a dimer and forms respiratory supercomplexes (SCs) in the inner mitochondrial membrane with NADH-ubiquinone oxidoreductase (complex I, CI) and ubiquinol-cytochrome c oxidoreductase (cytochrome b-c1 complex, complex III, CIII), resulting in various different assemblies (supercomplexes I(1)IV(1), I(1)III(3)IV(2), III(2)IV(1) and III(2)IV(2) as well as larger supercomplexes of compositions like I(1)III(2)IV(5-6)).

The protein resides in the mitochondrion inner membrane. Its pathway is energy metabolism; oxidative phosphorylation. Component of the cytochrome c oxidase, the last enzyme in the mitochondrial electron transport chain which drives oxidative phosphorylation. The respiratory chain contains 3 multisubunit complexes succinate dehydrogenase (complex II, CII), ubiquinol-cytochrome c oxidoreductase (cytochrome b-c1 complex, complex III, CIII) and cytochrome c oxidase (complex IV, CIV), that cooperate to transfer electrons derived from NADH and succinate to molecular oxygen, creating an electrochemical gradient over the inner membrane that drives transmembrane transport and the ATP synthase. Cytochrome c oxidase is the component of the respiratory chain that catalyzes the reduction of oxygen to water. Electrons originating from reduced cytochrome c in the intermembrane space (IMS) are transferred via the dinuclear copper A center (CU(A)) of Cox2 and heme A of Cox1 to the active site in Cox1, a binuclear center (BNC) formed by heme A3 and copper B (CU(B)). The BNC reduces molecular oxygen to 2 water molecules using 4 electrons from cytochrome c in the IMS and 4 protons from the mitochondrial matrix. This Neurospora crassa (strain ATCC 24698 / 74-OR23-1A / CBS 708.71 / DSM 1257 / FGSC 987) protein is Cytochrome c oxidase subunit 6, mitochondrial (cox-6).